A 331-amino-acid chain; its full sequence is Acyl-CoA desaturase 1 (331 aa).

Residues 1-46 are Cytoplasmic-facing; sequence MTEVDDGCGGRLRGSVLLEDECDLKQECETPTHSLVQGRDPPVVVV. The chain crosses the membrane as a helical span at residues 47–67; it reads WRNVVLMSVLHTAAVYGLVLL. Substrate is bound at residue asparagine 49. Residues 68-71 are Lumenal-facing; the sequence is PSAS. Residues 72 to 90 form a helical membrane-spanning segment; the sequence is AYTLLAFCFVSSALGITAG. Residues 91 to 189 are Cytoplasmic-facing; it reads AHRLWSHRSY…DRVVMFQRRF (99 aa). The Fe cation site is built by histidine 92 and histidine 97. A Histidine box-1 motif is present at residues 92-97; it reads HRLWSH. Substrate is bound by residues asparagine 120, arginine 127, and aspartate 128. Histidine 129, histidine 132, and histidine 133 together coordinate Fe cation. The Histidine box-2 motif lies at 129–133; that stretch reads HRVHH. Lysine 161 provides a ligand contact to substrate. The helical transmembrane segment at 190-209 threads the bilayer; sequence YKHSVVVMCFLIPAMLPWFL. Residues 210–213 are Lumenal-facing; sequence WAES. Residues 214–235 form a helical membrane-spanning segment; it reads LWVGYFVPVLLRYALVLNATWL. Tryptophan 234 contacts substrate. At 236 to 331 the chain is on the cytoplasmic side; sequence VNSAAHMWGN…RTGDGSHRSG (96 aa). The Fe cation site is built by histidine 241, histidine 270, histidine 273, and histidine 274. The Histidine box-3 motif lies at 270–274; the sequence is HNYHH.

This sequence belongs to the fatty acid desaturase type 1 family. Fe(2+) is required as a cofactor. In terms of tissue distribution, expression is highest in liver, followed by brain and intestine, and lowest in spleen. Also expressed in heart, gill and muscle.

Its subcellular location is the endoplasmic reticulum membrane. The enzyme catalyses octadecanoyl-CoA + 2 Fe(II)-[cytochrome b5] + O2 + 2 H(+) = (9Z)-octadecenoyl-CoA + 2 Fe(III)-[cytochrome b5] + 2 H2O. Functionally, stearoyl-CoA desaturase that utilizes O(2) and electrons from reduced cytochrome b5 to introduce the first double bond into saturated fatty acyl-CoA substrates. Catalyzes the insertion of a cis double bond at the delta-9 position into fatty acyl-CoA substrates including palmitoyl-CoA and stearoyl-CoA. Contributes to the biosynthesis of membrane phospholipids, cholesterol esters and triglycerides. The chain is Acyl-CoA desaturase 1 from Tachysurus fulvidraco (Yellow catfish).